The primary structure comprises 293 residues: Pyridoxal 5'-phosphate synthase subunit PdxS (293 aa).

Aspartate 23 lines the D-ribose 5-phosphate pocket. Catalysis depends on lysine 80, which acts as the Schiff-base intermediate with D-ribose 5-phosphate. Glycine 152 contacts D-ribose 5-phosphate. Arginine 164 provides a ligand contact to D-glyceraldehyde 3-phosphate. Residues glycine 213 and 234–235 (GS) each bind D-ribose 5-phosphate.

The protein belongs to the PdxS/SNZ family. In terms of assembly, in the presence of PdxT, forms a dodecamer of heterodimers.

The enzyme catalyses aldehydo-D-ribose 5-phosphate + D-glyceraldehyde 3-phosphate + L-glutamine = pyridoxal 5'-phosphate + L-glutamate + phosphate + 3 H2O + H(+). The protein operates within cofactor biosynthesis; pyridoxal 5'-phosphate biosynthesis. Catalyzes the formation of pyridoxal 5'-phosphate from ribose 5-phosphate (RBP), glyceraldehyde 3-phosphate (G3P) and ammonia. The ammonia is provided by the PdxT subunit. Can also use ribulose 5-phosphate and dihydroxyacetone phosphate as substrates, resulting from enzyme-catalyzed isomerization of RBP and G3P, respectively. This Herpetosiphon aurantiacus (strain ATCC 23779 / DSM 785 / 114-95) protein is Pyridoxal 5'-phosphate synthase subunit PdxS.